The sequence spans 139 residues: Large ribosomal subunit protein bL21 (139 aa).

This sequence belongs to the bacterial ribosomal protein bL21 family. In terms of assembly, part of the 50S ribosomal subunit. Contacts protein L20.

In terms of biological role, this protein binds to 23S rRNA in the presence of protein L20. This chain is Large ribosomal subunit protein bL21, found in Prochlorococcus marinus (strain NATL2A).